Reading from the N-terminus, the 537-residue chain is Ceramide kinase (537 aa).

The interval 1–115 (MGATGAAEPL…CPEEQLCHLW (115 aa)) is essential for enzyme activity. The interval 1-125 (MGATGAAEPL…LQTLREMLEK (125 aa)) is required for binding to sulfatide and phosphoinositides. The 151-residue stretch at 128 to 278 (SRPKHLLVFI…MDVSSVHHNS (151 aa)) folds into the DAGKc domain. ATP-binding positions include 138-140 (NPF) and 170-174 (TEHAN). 195-198 (GGDG) is a substrate binding site. D197 functions as the Proton donor/acceptor in the catalytic mechanism. ATP contacts are provided by residues E202, 239 to 241 (GST), R304, and R310. Phosphoserine is present on residues S340 and S408. Residue 502–504 (DGE) coordinates ATP.

It depends on Ca(2+) as a cofactor. Requires Mg(2+) as cofactor. High level expression in heart, brain, skeletal muscle, kidney and liver; moderate in peripheral blood leukocytes and thymus; very low in spleen, small intestine, placenta and lung.

The protein localises to the cytoplasm. It is found in the cell membrane. It catalyses the reaction an N-acylsphing-4-enine + ATP = an N-acylsphing-4-enine 1-phosphate + ADP + H(+). The enzyme catalyses N-(hexanoyl)sphing-4-enine + ATP = N-hexanoylsphing-4-enine 1-phosphate + ADP + H(+). The catalysed reaction is N-(acetyl)-sphing-4-enine + ATP = N-(acetyl)-sphing-4-enine-1-phosphate + ADP + H(+). It carries out the reaction N-hexadecanoylsphing-4-enine + ATP = N-(hexadecanoyl)-sphing-4-enine-1-phosphate + ADP + H(+). It catalyses the reaction N-hexanoyl-(4R)-hydroxysphinganine + ATP = N-hexanoyl-(4R)-hydroxysphinganine-1-phosphate + ADP + H(+). With respect to regulation, inhibited by sulfatide. Inhibited by sphinganine, sphingenine, and N,N-Dimethylsphingosine (DMS). Cardiolipin at 0.1 uM significantly increases activity, whereas at concentrations &gt;1 uM has an inhibitory effect. Catalyzes specifically the phosphorylation of ceramide to form ceramide 1-phosphate. Acts efficiently on natural and analog ceramides (C6, C8, C16 ceramides, and C8-dihydroceramide), to a lesser extent on C2-ceramide and C6-dihydroceramide, but not on other lipids, such as various sphingosines. Shows a greater preference for D-erythro isomer of ceramides. Binds phosphoinositides. The polypeptide is Ceramide kinase (CERK) (Homo sapiens (Human)).